A 935-amino-acid polypeptide reads, in one-letter code: C-1-tetrahydrofolate synthase, cytoplasmic (935 aa).

Met-1 is modified (N-acetylmethionine). The interval 2–291 is methylenetetrahydrofolate dehydrogenase and methenyltetrahydrofolate cyclohydrolase (D/C) domain; sequence APAGILNGKL…MLMQSTVESA (290 aa). Residues 52 to 56 and 99 to 101 each bind substrate; these read YINVK and VQL. Lys-56 is a catalytic residue. NADP(+) is bound by residues 172–174 and Ser-197; that span reads GRS. Substrate is bound at residue 272 to 276; that stretch reads PGGVG. Residues 310–935 form a formyltetrahydrofolate synthetase domain region; the sequence is LNLKTPVPSD…PETEQVNGLF (626 aa). Phosphoserine is present on Ser-318. 380-387 contributes to the ATP binding site; that stretch reads TPLGEGKS. Phosphoserine occurs at positions 413 and 490.

In the N-terminal section; belongs to the tetrahydrofolate dehydrogenase/cyclohydrolase family. It in the C-terminal section; belongs to the formate--tetrahydrofolate ligase family. Homodimer.

The protein resides in the cytoplasm. It carries out the reaction (6R)-5,10-methylene-5,6,7,8-tetrahydrofolate + NADP(+) = (6R)-5,10-methenyltetrahydrofolate + NADPH. The enzyme catalyses (6R)-5,10-methenyltetrahydrofolate + H2O = (6R)-10-formyltetrahydrofolate + H(+). The catalysed reaction is (6S)-5,6,7,8-tetrahydrofolate + formate + ATP = (6R)-10-formyltetrahydrofolate + ADP + phosphate. It participates in one-carbon metabolism; tetrahydrofolate interconversion. Functionally, trifunctional enzyme that catalyzes the interconversion of three forms of one-carbon-substituted tetrahydrofolate: (6R)-5,10-methylene-5,6,7,8-tetrahydrofolate, 5,10-methenyltetrahydrofolate and (6S)-10-formyltetrahydrofolate. These derivatives of tetrahydrofolate are differentially required in nucleotide and amino acid biosynthesis, (6S)-10-formyltetrahydrofolate being required for purine biosynthesis while (6R)-5,10-methylene-5,6,7,8-tetrahydrofolate is used for serine and methionine biosynthesis for instance. The sequence is that of C-1-tetrahydrofolate synthase, cytoplasmic (Mthfd1) from Mus musculus (Mouse).